The following is a 666-amino-acid chain: Transketolase (666 aa).

Residue His-26 participates in substrate binding. Residues His-66 and 114–116 (GPL) contribute to the thiamine diphosphate site. Asp-155 serves as a coordination point for Mg(2+). Thiamine diphosphate-binding residues include Gly-156 and Asn-185. Mg(2+)-binding residues include Asn-185 and Ile-187. 3 residues coordinate substrate: His-261, Arg-358, and Ser-385. His-261 contacts thiamine diphosphate. Glu-411 functions as the Proton donor in the catalytic mechanism. Phe-437 contacts thiamine diphosphate. Residues His-461, Asp-469, and Arg-520 each contribute to the substrate site.

Belongs to the transketolase family. As to quaternary structure, homodimer. Requires Mg(2+) as cofactor. Ca(2+) is required as a cofactor. Mn(2+) serves as cofactor. It depends on Co(2+) as a cofactor. The cofactor is thiamine diphosphate.

The enzyme catalyses D-sedoheptulose 7-phosphate + D-glyceraldehyde 3-phosphate = aldehydo-D-ribose 5-phosphate + D-xylulose 5-phosphate. In terms of biological role, catalyzes the transfer of a two-carbon ketol group from a ketose donor to an aldose acceptor, via a covalent intermediate with the cofactor thiamine pyrophosphate. The protein is Transketolase (tkt) of Buchnera aphidicola subsp. Baizongia pistaciae (strain Bp).